We begin with the raw amino-acid sequence, 230 residues long: Ion-translocating oxidoreductase complex subunit E (230 aa).

5 helical membrane-spanning segments follow: residues 39–59, 69–89, 93–113, 125–145, and 182–202; these read LGLG…VSLI, IPVF…LMNA, GLYL…IIIG, LPAA…LVVL, and SFLL…LIAL.

It belongs to the NqrDE/RnfAE family. As to quaternary structure, the complex is composed of six subunits: RnfA, RnfB, RnfC, RnfD, RnfE and RnfG.

It localises to the cell inner membrane. Functionally, part of a membrane-bound complex that couples electron transfer with translocation of ions across the membrane. The sequence is that of Ion-translocating oxidoreductase complex subunit E from Vibrio vulnificus (strain YJ016).